The following is a 706-amino-acid chain: Fatty acid oxidation complex subunit alpha (706 aa).

The enoyl-CoA hydratase stretch occupies residues 1–188; that stretch reads MEKTFNLTRR…KMGLVNDVVP (188 aa). The segment at 308–706 is 3-hydroxyacyl-CoA dehydrogenase; that stretch reads RKVKKAVILG…TMAQENAHFF (399 aa).

It in the N-terminal section; belongs to the enoyl-CoA hydratase/isomerase family. In the central section; belongs to the 3-hydroxyacyl-CoA dehydrogenase family. As to quaternary structure, heterotetramer of two alpha chains (FadJ) and two beta chains (FadI).

The protein localises to the cytoplasm. It catalyses the reaction a (3S)-3-hydroxyacyl-CoA = a (2E)-enoyl-CoA + H2O. It carries out the reaction a 4-saturated-(3S)-3-hydroxyacyl-CoA = a (3E)-enoyl-CoA + H2O. The enzyme catalyses a (3S)-3-hydroxyacyl-CoA + NAD(+) = a 3-oxoacyl-CoA + NADH + H(+). The catalysed reaction is (3S)-3-hydroxybutanoyl-CoA = (3R)-3-hydroxybutanoyl-CoA. The protein operates within lipid metabolism; fatty acid beta-oxidation. Its function is as follows. Catalyzes the formation of a hydroxyacyl-CoA by addition of water on enoyl-CoA. Also exhibits 3-hydroxyacyl-CoA epimerase and 3-hydroxyacyl-CoA dehydrogenase activities. The protein is Fatty acid oxidation complex subunit alpha of Shewanella baltica (strain OS185).